The chain runs to 483 residues: Probable glycine dehydrogenase (decarboxylating) subunit 2 (483 aa).

The tract at residues 1 to 24 (MLIFDHSRPGRTAAAQLPATGGDL) is disordered. Lys264 is subject to N6-(pyridoxal phosphate)lysine.

Belongs to the GcvP family. C-terminal subunit subfamily. In terms of assembly, the glycine cleavage system is composed of four proteins: P, T, L and H. In this organism, the P 'protein' is a heterodimer of two subunits. Pyridoxal 5'-phosphate serves as cofactor.

It carries out the reaction N(6)-[(R)-lipoyl]-L-lysyl-[glycine-cleavage complex H protein] + glycine + H(+) = N(6)-[(R)-S(8)-aminomethyldihydrolipoyl]-L-lysyl-[glycine-cleavage complex H protein] + CO2. In terms of biological role, the glycine cleavage system catalyzes the degradation of glycine. The P protein binds the alpha-amino group of glycine through its pyridoxal phosphate cofactor; CO(2) is released and the remaining methylamine moiety is then transferred to the lipoamide cofactor of the H protein. The chain is Probable glycine dehydrogenase (decarboxylating) subunit 2 from Thiobacillus denitrificans (strain ATCC 25259 / T1).